Consider the following 478-residue polypeptide: MTKKQKKKLCQLQLNEIKTSDDPTKLSCSFVIFDFDVSHNNTVISKDVALEAASTIINKPIVAKYYEVDELNTSTDALGTHEAYLDTDKHGELEVKRDTAPIGVFTSEGYITEIETPDGKKEVLAADAILWSSRFKDACELLLEWYGRGININTSCEILYSNYTVQDGIEHLQSPIYFEGHAILNSEKRGEHDIVLPAYDSSKLLSFNELQRFERLVAQAATRQNNEEGEKMNKFRKVFELSHSDVRTLLYSQLDPTLDKESDSFIADVYDTYFIVNVYSWSDENSYDKYFKFNYTRTGDTVSIDFDSKTEVFMTRNWEEVVPEPIQSQLNQKDEQIKDLTKQVNQINKDKVGIEQQFNTASEKLVQLNSEVEQLKPYKEKHEKTLLEQKLSEKNEFYKAKFEALNAEEKFSTEEVQNLIHASVKQDEEGEKAVLQLNTMLVDLVSVPTETNTTIREFSSKRENLIPNDDSFESRFSQ.

Positions 326 to 419 (IQSQLNQKDE…KFSTEEVQNL (94 aa)) form a coiled coil.

The sequence is that of SPbeta prophage-derived uncharacterized protein YonD (yonD) from Bacillus subtilis (strain 168).